The sequence spans 492 residues: Transcript termination protein OPG145 (492 aa).

Positions 100 to 256 constitute a Helicase ATP-binding domain; it reads MIELKRPLYI…NSIINIAKLS (157 aa). 113–120 lines the ATP pocket; that stretch reads LACGFGKT. A DEAH box motif is present at residues 206–209; the sequence is DESH.

The protein belongs to the helicase family. Poxviruses subfamily. As to quaternary structure, interacts with OPG087. Might be part of a transcription complex composed at least of OPG087, OPG110, and OPG145.

It is found in the virion. DNA helicase which seems to act as a postreplicative transcription termination factor. Involved in ATP-dependent release of nascent RNA. Forms a stable complex with single-stranded DNA, and to a lesser extent RNA. In Cynomys gunnisoni (Gunnison's prairie dog), this protein is Transcript termination protein OPG145 (OPG145).